The chain runs to 376 residues: MITYSHQNIDQSDIDALTKALKDEILTGGKKVDEFEEALCEYIGVKHACVLNSATSALHLAYTALGIKEKIVLTTPLTFAATANAALIAGAKVEFIDIKNDGNIDEKKLEARLVKNSTDIGAISVVDFGGNSVEMDEISNLAKKYNIPLIDDASHALGSEYKGKKVGSMADLSIFSFHPVKPITTFEGGAVVSNNKELISKIKLLRSHGIVKKRLWDSDMIELGYNYRLSDVACALGINQLKKLDHNLEKREEITSFYDKEFEKNHYFSTIKIKDYKKSSRHLYPILLFPEFYCQKEELFESLLHAGIGVQVHYKPTYEFSFYKKLLGEIRLQNADNFYKAELSIPCHQEMNLKDAKFVKDTLFSILEKVKKGYCG.

Substrate contacts are provided by residues tyrosine 4, 24–27, alanine 54, and serine 176; that span reads EILT. At lysine 181 the chain carries N6-(pyridoxal phosphate)lysine. Substrate is bound by residues asparagine 226 and 311–314; that span reads QVHY.

This sequence belongs to the DegT/DnrJ/EryC1 family.

It carries out the reaction UDP-4-amino-4,6-dideoxy-N-acetyl-beta-L-altrosamine + 2-oxoglutarate = UDP-2-acetamido-2,6-dideoxy-beta-L-arabino-hex-4-ulose + L-glutamate. In terms of biological role, catalyzes the second step in the biosynthesis of pseudaminic acid, a sialic-acid-like sugar that is used to modify flagellin. Uses UDP-2-acetamido-2,6-dideoxy-beta-L-arabino-4-hexulose as substrate producing UDP-4-amino-4,6-dideoxy-beta-L-AltNAc. The chain is UDP-4-amino-4,6-dideoxy-N-acetyl-beta-L-altrosamine transaminase (pseC) from Campylobacter jejuni subsp. jejuni serotype O:23/36 (strain 81-176).